The primary structure comprises 659 residues: Macrolide export ATP-binding/permease protein MacB (659 aa).

One can recognise an ABC transporter domain in the interval Ile10 to Ser249. Gly47–Ser54 serves as a coordination point for ATP. 4 helical membrane-spanning segments follow: residues Ser287–Gly307, Leu538–Leu558, Ile594–Trp614, and Val619–Phe639.

Belongs to the ABC transporter superfamily. Macrolide exporter (TC 3.A.1.122) family. As to quaternary structure, homodimer.

Its subcellular location is the cell inner membrane. In terms of biological role, non-canonical ABC transporter that contains transmembrane domains (TMD), which form a pore in the inner membrane, and an ATP-binding domain (NBD), which is responsible for energy generation. Confers resistance against macrolides. The sequence is that of Macrolide export ATP-binding/permease protein MacB from Nitrosomonas europaea (strain ATCC 19718 / CIP 103999 / KCTC 2705 / NBRC 14298).